A 485-amino-acid chain; its full sequence is Protein adenylyltransferase Fic (485 aa).

The helical transmembrane segment at tyrosine 21 to serine 43 threads the bilayer. TPR repeat units follow at residues alanine 107 to histidine 140 and proline 141 to asparagine 175. The Inhibitory (S/T)XXXE(G/N) motif motif lies at serine 232 to glycine 237. ATP contacts are provided by residues glutamate 236 and valine 317–histidine 320. A Fido domain is found at isoleucine 286–aspartate 421. Histidine 364 is a catalytic residue. Residues aspartate 368–arginine 375, tyrosine 400–tyrosine 401, and asparagine 408 each bind ATP.

This sequence belongs to the fic family. As to quaternary structure, homodimer.

It is found in the membrane. It carries out the reaction L-tyrosyl-[protein] + ATP = O-(5'-adenylyl)-L-tyrosyl-[protein] + diphosphate. The enzyme catalyses L-threonyl-[protein] + ATP = 3-O-(5'-adenylyl)-L-threonyl-[protein] + diphosphate. The catalysed reaction is 3-O-(5'-adenylyl)-L-threonyl-[protein] + H2O = L-threonyl-[protein] + AMP + H(+). With respect to regulation, the side chain of Glu-236 determines which of the two opposing activities (AMPylase or de-AMPylase) will take place. In response to endoplasmic reticulum stress, mediates de-AMPylase activity. Adenylyltransferase activity is inhibited by the inhibitory helix present at the N-terminus: Glu-236 binds ATP and competes with ATP-binding at Arg-375, thereby preventing adenylyltransferase activity. In unstressed cells, disengagement of Glu-236 promotes adenylyltransferase activity. Activation dissociates ATP-binding from Glu-236, allowing ordered binding of the entire ATP moiety with the alpha-phosphate in an orientation that is productive for accepting an incoming target hydroxyl side chain. Its function is as follows. Protein that can both mediate the addition of adenosine 5'-monophosphate (AMP) to specific residues of target proteins (AMPylation), and the removal of the same modification from target proteins (de-AMPylation), depending on the context. The side chain of Glu-236 determines which of the two opposing activities (AMPylase or de-AMPylase) will take place. Acts as a key regulator of the unfolded protein response (UPR) by mediating AMPylation or de-AMPylation of Hsc70-3/BiP. In unstressed cells, acts as an adenylyltransferase by mediating AMPylation of Hsc70-3/BiP at 'Thr-518', thereby inactivating it. In response to endoplasmic reticulum stress, acts as a phosphodiesterase by mediating removal of ATP (de-AMPylation) from Hsc70-3/BiP at 'Thr-518', leading to restore HSPA5/BiP activity. This chain is Protein adenylyltransferase Fic, found in Drosophila virilis (Fruit fly).